A 715-amino-acid polypeptide reads, in one-letter code: Fatty acid oxidation complex subunit alpha (715 aa).

Residues 1–190 (MTTTSAFMLN…KAGLVDDVVP (190 aa)) are enoyl-CoA hydratase. The interval 306–715 (GPLNSVGILG…WTNGETDQGN (410 aa)) is 3-hydroxyacyl-CoA dehydrogenase.

It in the N-terminal section; belongs to the enoyl-CoA hydratase/isomerase family. The protein in the central section; belongs to the 3-hydroxyacyl-CoA dehydrogenase family. In terms of assembly, heterotetramer of two alpha chains (FadJ) and two beta chains (FadI).

Its subcellular location is the cytoplasm. The enzyme catalyses a (3S)-3-hydroxyacyl-CoA = a (2E)-enoyl-CoA + H2O. It catalyses the reaction a 4-saturated-(3S)-3-hydroxyacyl-CoA = a (3E)-enoyl-CoA + H2O. It carries out the reaction a (3S)-3-hydroxyacyl-CoA + NAD(+) = a 3-oxoacyl-CoA + NADH + H(+). The catalysed reaction is (3S)-3-hydroxybutanoyl-CoA = (3R)-3-hydroxybutanoyl-CoA. Its pathway is lipid metabolism; fatty acid beta-oxidation. Its function is as follows. Catalyzes the formation of a hydroxyacyl-CoA by addition of water on enoyl-CoA. Also exhibits 3-hydroxyacyl-CoA epimerase and 3-hydroxyacyl-CoA dehydrogenase activities. This is Fatty acid oxidation complex subunit alpha from Salmonella gallinarum (strain 287/91 / NCTC 13346).